Here is a 424-residue protein sequence, read N- to C-terminus: Homeobox-containing protein 1 (424 aa).

The 30-residue stretch at 1–30 folds into the HNF-p1 domain; that stretch reads MLFTIEQLELIKKLQHTGMSSDQLLKAFGE. Residues 103–199 form the POU-specific atypical domain; sequence SQRTPMKEIT…PNKLAAFLAD (97 aa). The segment at residues 215–291 is a DNA-binding region (homeobox); the sequence is QRRERYVFRP…NKRKELRRRS (77 aa). The segment at 291-345 is disordered; it reads SAEASAASTSSASSSASSTANHDSVSVSSMSPRDEETSSRNTTPETAISPSPAVS. A compositionally biased stretch (low complexity) spans 293-310; it reads EASAASTSSASSSASSTA. Polar residues-rich tracts occupy residues 311–321 and 329–345; these read NHDSVSVSSMS and SRNT…PAVS.

The protein belongs to the HMBOX1 homeobox family. As to expression, expressed in both AWC neurons. Also expressed in the FLP mechanosensory neurons.

Its subcellular location is the nucleus. In terms of biological role, transcriptional repressor which maintains cell fate asymmetry of AWC neurons in adults by repressing the expression of multiple AWC (OFF) genes, including srsx-3 in the AWC (ON) neuron. In Caenorhabditis elegans, this protein is Homeobox-containing protein 1.